A 484-amino-acid polypeptide reads, in one-letter code: Adenylosuccinate lyase (484 aa).

Alanine 2 carries the N-acetylalanine modification. Substrate contacts are provided by residues 20-21 (RY), 85-87 (RHD), and 111-112 (TS). Lysine 147 bears the N6-acetyllysine mark. Histidine 159 serves as the catalytic Proton donor/acceptor. Position 241 (glutamine 241) interacts with substrate. The active-site Proton donor/acceptor is serine 289. Lysine 295 is subject to N6-acetyllysine. Substrate is bound by residues arginine 303, arginine 329, serine 334, and arginine 338. Residue lysine 415 forms a Glycyl lysine isopeptide (Lys-Gly) (interchain with G-Cter in SUMO1) linkage.

The protein belongs to the lyase 1 family. Adenylosuccinate lyase subfamily. Homotetramer. Residues from neighboring subunits contribute catalytic and substrate-binding residues to each active site.

The catalysed reaction is N(6)-(1,2-dicarboxyethyl)-AMP = fumarate + AMP. It carries out the reaction (2S)-2-[5-amino-1-(5-phospho-beta-D-ribosyl)imidazole-4-carboxamido]succinate = 5-amino-1-(5-phospho-beta-D-ribosyl)imidazole-4-carboxamide + fumarate. It participates in purine metabolism; AMP biosynthesis via de novo pathway; AMP from IMP: step 2/2. Its pathway is purine metabolism; IMP biosynthesis via de novo pathway; 5-amino-1-(5-phospho-D-ribosyl)imidazole-4-carboxamide from 5-amino-1-(5-phospho-D-ribosyl)imidazole-4-carboxylate: step 2/2. Functionally, catalyzes two non-sequential steps in de novo AMP synthesis: converts (S)-2-(5-amino-1-(5-phospho-D-ribosyl)imidazole-4-carboxamido)succinate (SAICAR) to fumarate plus 5-amino-1-(5-phospho-D-ribosyl)imidazole-4-carboxamide, and thereby also contributes to de novo IMP synthesis, and converts succinyladenosine monophosphate (SAMP) to AMP and fumarate. The polypeptide is Adenylosuccinate lyase (Adsl) (Mus musculus (Mouse)).